The chain runs to 121 residues: UPF0102 protein BT_2236 (121 aa).

It belongs to the UPF0102 family.

In Bacteroides thetaiotaomicron (strain ATCC 29148 / DSM 2079 / JCM 5827 / CCUG 10774 / NCTC 10582 / VPI-5482 / E50), this protein is UPF0102 protein BT_2236.